The chain runs to 777 residues: Phosphate transporter PHO1 homolog 10 (777 aa).

The SPX domain maps to 1 to 322; that stretch reads MKFGKIFKKQ…SRNASRNYMK (322 aa). The Cytoplasmic segment spans residues 1–372; the sequence is MKFGKIFKKQ…RPKVKRERHR (372 aa). A helical membrane pass occupies residues 373-393; the sequence is VTFFSGFFSGCSIALVIAVVF. Topologically, residues 394-408 are extracellular; it reads KIESRKIMEKNYGTE. A helical membrane pass occupies residues 409-429; that stretch reads YMANIIPLYSLFGFIILHMLM. At 430–459 the chain is on the cytoplasmic side; sequence YSANIYFWKRYRVNYTFIFGFKQGTELGDR. A helical membrane pass occupies residues 460–480; it reads EVFLVSTGLAVLAFVCFLLNL. The Extracellular portion of the chain corresponds to 481-496; the sequence is QLDMDWRMKHHKTLPE. The chain crosses the membrane as a helical span at residues 497-517; sequence VIPLCLATIVLFILFCPFNII. Over 518–646 the chain is Cytoplasmic; sequence YRSSRFFFIR…YELKKGRTWM (129 aa). The region spanning 581–775 is the EXS domain; sequence HSHGVYNAFY…HYYDDDDVDK (195 aa). The chain crosses the membrane as a helical span at residues 647–667; it reads ILALVSSGVATGMNTFWDIVI. Residues 668 to 691 lie on the Extracellular side of the membrane; sequence DWGLLRKHSKNPYLRDKLLVPHKS. Residues 692–712 traverse the membrane as a helical segment; the sequence is VYFAAMVVNVILRVAWMQLVL. At 713-777 the chain is on the cytoplasmic side; sequence EFNLKSLHKI…YDDDDVDKDD (65 aa).

The protein belongs to the SYG1 (TC 2.A.94) family. As to expression, expressed in root epidermis and cortex, leaf blades and hydathodes, stems and flowers.

The protein localises to the cell membrane. In terms of biological role, may transport inorganic phosphate (Pi). The chain is Phosphate transporter PHO1 homolog 10 (PHO1-H10) from Arabidopsis thaliana (Mouse-ear cress).